The following is a 357-amino-acid chain: S-adenosylmethionine:tRNA ribosyltransferase-isomerase (357 aa).

The protein belongs to the QueA family. In terms of assembly, monomer.

The protein resides in the cytoplasm. It carries out the reaction 7-aminomethyl-7-carbaguanosine(34) in tRNA + S-adenosyl-L-methionine = epoxyqueuosine(34) in tRNA + adenine + L-methionine + 2 H(+). Its pathway is tRNA modification; tRNA-queuosine biosynthesis. Transfers and isomerizes the ribose moiety from AdoMet to the 7-aminomethyl group of 7-deazaguanine (preQ1-tRNA) to give epoxyqueuosine (oQ-tRNA). This chain is S-adenosylmethionine:tRNA ribosyltransferase-isomerase, found in Edwardsiella ictaluri (strain 93-146).